The chain runs to 49 residues: Large ribosomal subunit protein bL33C (49 aa).

The protein belongs to the bacterial ribosomal protein bL33 family.

The polypeptide is Large ribosomal subunit protein bL33C (Lactococcus lactis subsp. cremoris (strain MG1363)).